The following is a 119-amino-acid chain: Large ribosomal subunit protein bL19 (119 aa).

This sequence belongs to the bacterial ribosomal protein bL19 family.

This protein is located at the 30S-50S ribosomal subunit interface and may play a role in the structure and function of the aminoacyl-tRNA binding site. This is Large ribosomal subunit protein bL19 from Borreliella afzelii (strain PKo) (Borrelia afzelii).